A 356-amino-acid chain; its full sequence is UDP-N-acetylglucosamine--N-acetylmuramyl-(pentapeptide) pyrophosphoryl-undecaprenol N-acetylglucosamine transferase (356 aa).

UDP-N-acetyl-alpha-D-glucosamine-binding positions include T12–G14, N124, R163, S188, I242, A261–E266, and Q287.

This sequence belongs to the glycosyltransferase 28 family. MurG subfamily.

The protein localises to the cell inner membrane. The enzyme catalyses di-trans,octa-cis-undecaprenyl diphospho-N-acetyl-alpha-D-muramoyl-L-alanyl-D-glutamyl-meso-2,6-diaminopimeloyl-D-alanyl-D-alanine + UDP-N-acetyl-alpha-D-glucosamine = di-trans,octa-cis-undecaprenyl diphospho-[N-acetyl-alpha-D-glucosaminyl-(1-&gt;4)]-N-acetyl-alpha-D-muramoyl-L-alanyl-D-glutamyl-meso-2,6-diaminopimeloyl-D-alanyl-D-alanine + UDP + H(+). The protein operates within cell wall biogenesis; peptidoglycan biosynthesis. Functionally, cell wall formation. Catalyzes the transfer of a GlcNAc subunit on undecaprenyl-pyrophosphoryl-MurNAc-pentapeptide (lipid intermediate I) to form undecaprenyl-pyrophosphoryl-MurNAc-(pentapeptide)GlcNAc (lipid intermediate II). The chain is UDP-N-acetylglucosamine--N-acetylmuramyl-(pentapeptide) pyrophosphoryl-undecaprenol N-acetylglucosamine transferase from Pseudomonas fluorescens (strain ATCC BAA-477 / NRRL B-23932 / Pf-5).